A 497-amino-acid polypeptide reads, in one-letter code: 3-octaprenyl-4-hydroxybenzoate carboxy-lyase (497 aa).

N175 contributes to the Mn(2+) binding site. Prenylated FMN-binding positions include 178–180 (IYR), 192–194 (RWL), and 197–198 (RG). E241 contributes to the Mn(2+) binding site. The active-site Proton donor is the D290.

Belongs to the UbiD family. In terms of assembly, homohexamer. Requires prenylated FMN as cofactor. The cofactor is Mn(2+).

The protein localises to the cell membrane. It carries out the reaction a 4-hydroxy-3-(all-trans-polyprenyl)benzoate + H(+) = a 2-(all-trans-polyprenyl)phenol + CO2. The protein operates within cofactor biosynthesis; ubiquinone biosynthesis. Catalyzes the decarboxylation of 3-octaprenyl-4-hydroxy benzoate to 2-octaprenylphenol, an intermediate step in ubiquinone biosynthesis. This Shigella boydii serotype 4 (strain Sb227) protein is 3-octaprenyl-4-hydroxybenzoate carboxy-lyase.